The following is a 103-amino-acid chain: Small ribosomal subunit protein uS10 (103 aa).

The protein belongs to the universal ribosomal protein uS10 family. Part of the 30S ribosomal subunit.

Involved in the binding of tRNA to the ribosomes. The protein is Small ribosomal subunit protein uS10 of Sulfurovum sp. (strain NBC37-1).